The sequence spans 458 residues: UDP-N-acetylmuramoylalanine--D-glutamate ligase (458 aa).

Position 124–130 (124–130 (GSDGKTT)) interacts with ATP.

It belongs to the MurCDEF family.

The protein localises to the cytoplasm. The enzyme catalyses UDP-N-acetyl-alpha-D-muramoyl-L-alanine + D-glutamate + ATP = UDP-N-acetyl-alpha-D-muramoyl-L-alanyl-D-glutamate + ADP + phosphate + H(+). It functions in the pathway cell wall biogenesis; peptidoglycan biosynthesis. In terms of biological role, cell wall formation. Catalyzes the addition of glutamate to the nucleotide precursor UDP-N-acetylmuramoyl-L-alanine (UMA). The sequence is that of UDP-N-acetylmuramoylalanine--D-glutamate ligase from Clostridium botulinum (strain ATCC 19397 / Type A).